Here is a 158-residue protein sequence, read N- to C-terminus: Glycosyl-phosphatidylinositol-anchored molecule-like protein (158 aa).

Positions 1–17 are cleaved as a signal peptide; the sequence is MLLFALLLAMELPLVAA. The region spanning 29–134 is the UPAR/Ly6 domain; sequence LRCHDCAVIN…DEVTEEELPE (106 aa). Cystine bridges form between Cys31–Cys55, Cys34–Cys42, Cys48–Cys73, Cys77–Cys104, and Cys105–Cys110.

The protein localises to the cell membrane. Functionally, may play a role in the apoptotic pathway or cell-cycle regulation induced by p53/TP53 after DNA damage. The polypeptide is Glycosyl-phosphatidylinositol-anchored molecule-like protein (GML) (Homo sapiens (Human)).